The chain runs to 320 residues: Malate dehydrogenase (320 aa).

NAD(+) contacts are provided by residues 10 to 15 (GSGMIG) and Asp-34. 2 residues coordinate substrate: Arg-83 and Arg-89. NAD(+) is bound by residues Asn-96 and 119-121 (ITN). Residues Asn-121 and Arg-152 each contribute to the substrate site. Residue His-176 is the Proton acceptor of the active site.

The protein belongs to the LDH/MDH superfamily. MDH type 3 family.

It catalyses the reaction (S)-malate + NAD(+) = oxaloacetate + NADH + H(+). Functionally, catalyzes the reversible oxidation of malate to oxaloacetate. The polypeptide is Malate dehydrogenase (Bartonella henselae (strain ATCC 49882 / DSM 28221 / CCUG 30454 / Houston 1) (Rochalimaea henselae)).